A 427-amino-acid chain; its full sequence is 3-isopropylmalate dehydratase large subunit (427 aa).

C308, C368, and C371 together coordinate [4Fe-4S] cluster.

Belongs to the aconitase/IPM isomerase family. LeuC type 2 subfamily. Heterodimer of LeuC and LeuD. [4Fe-4S] cluster is required as a cofactor.

The catalysed reaction is (2R,3S)-3-isopropylmalate = (2S)-2-isopropylmalate. It participates in amino-acid biosynthesis; L-leucine biosynthesis; L-leucine from 3-methyl-2-oxobutanoate: step 2/4. Catalyzes the isomerization between 2-isopropylmalate and 3-isopropylmalate, via the formation of 2-isopropylmaleate. The chain is 3-isopropylmalate dehydratase large subunit from Geobacter sulfurreducens (strain ATCC 51573 / DSM 12127 / PCA).